Consider the following 424-residue polypeptide: D-inositol 3-phosphate glycosyltransferase (424 aa).

Residues H9, 20–25 (DAGGMN), K78, Y110, T134, and R154 each bind 1D-myo-inositol 3-phosphate. G23 is a binding site for UDP-N-acetyl-alpha-D-glucosamine. UDP-N-acetyl-alpha-D-glucosamine contacts are provided by R231, K236, and R295. 3 residues coordinate Mg(2+): Y304, Q305, and A307. UDP-N-acetyl-alpha-D-glucosamine is bound by residues E317 and E325. T331 serves as a coordination point for Mg(2+).

Belongs to the glycosyltransferase group 1 family. MshA subfamily. In terms of assembly, homodimer.

The enzyme catalyses 1D-myo-inositol 3-phosphate + UDP-N-acetyl-alpha-D-glucosamine = 1D-myo-inositol 2-acetamido-2-deoxy-alpha-D-glucopyranoside 3-phosphate + UDP + H(+). In terms of biological role, catalyzes the transfer of a N-acetyl-glucosamine moiety to 1D-myo-inositol 3-phosphate to produce 1D-myo-inositol 2-acetamido-2-deoxy-glucopyranoside 3-phosphate in the mycothiol biosynthesis pathway. This is D-inositol 3-phosphate glycosyltransferase from Corynebacterium urealyticum (strain ATCC 43042 / DSM 7109).